The primary structure comprises 605 residues: Elongation factor 4 (605 aa).

One can recognise a tr-type G domain in the interval 9-192 (CRIRNFCIIA…SIVHRIPPPA (184 aa)). Residues 21-26 (DHGKST) and 139-142 (NKID) each bind GTP.

The protein belongs to the TRAFAC class translation factor GTPase superfamily. Classic translation factor GTPase family. LepA subfamily.

The protein resides in the cell inner membrane. It catalyses the reaction GTP + H2O = GDP + phosphate + H(+). Its function is as follows. Required for accurate and efficient protein synthesis under certain stress conditions. May act as a fidelity factor of the translation reaction, by catalyzing a one-codon backward translocation of tRNAs on improperly translocated ribosomes. Back-translocation proceeds from a post-translocation (POST) complex to a pre-translocation (PRE) complex, thus giving elongation factor G a second chance to translocate the tRNAs correctly. Binds to ribosomes in a GTP-dependent manner. This Chlorobium chlorochromatii (strain CaD3) protein is Elongation factor 4.